The chain runs to 373 residues: Probable pectin lyase D (373 aa).

An N-terminal signal peptide occupies residues 1–24; the sequence is MKYAAALTAVAALAARAAAVGVSG. 2 disulfides stabilise this stretch: cysteine 82-cysteine 101 and cysteine 91-cysteine 225. N-linked (GlcNAc...) asparagine glycosylation is present at asparagine 128. The active site involves arginine 255. Asparagine 274 carries an N-linked (GlcNAc...) asparagine glycan. The cysteines at positions 321 and 329 are disulfide-linked. An N-linked (GlcNAc...) asparagine glycan is attached at asparagine 348. Over residues 354–366 the composition is skewed to low complexity; sequence LPSADAASTSPAS. Residues 354–373 are disordered; the sequence is LPSADAASTSPASNAGQGNL.

Belongs to the polysaccharide lyase 1 family.

Its subcellular location is the secreted. The catalysed reaction is Eliminative cleavage of (1-&gt;4)-alpha-D-galacturonan methyl ester to give oligosaccharides with 4-deoxy-6-O-methyl-alpha-D-galact-4-enuronosyl groups at their non-reducing ends.. In terms of biological role, pectinolytic enzymes consist of four classes of enzymes: pectin lyase, polygalacturonase, pectin methylesterase and rhamnogalacturonase. Among pectinolytic enzymes, pectin lyase is the most important in depolymerization of pectin, since it cleaves internal glycosidic bonds of highly methylated pectins. This chain is Probable pectin lyase D (pelD), found in Aspergillus niger (strain ATCC MYA-4892 / CBS 513.88 / FGSC A1513).